The chain runs to 183 residues: Lipocalin (183 aa).

The N-terminal stretch at 1 to 20 (MKGLVLSFALVALSALCVYG) is a signal peptide. A disulfide bridge links Cys-83 with Cys-179.

This sequence belongs to the calycin superfamily. Lipocalin family. In terms of assembly, monomer. In terms of tissue distribution, expressed mainly in choroid plexus. Much lower expression in other brain areas, and absent from liver.

It localises to the secreted. Functionally, might have a transport function across the blood brain barrier. Is supposed to have similar functions as a transthyretin which must have evolved after the stage of the amphibians in evolution. This chain is Lipocalin, found in Rhinella marina (Cane toad).